The primary structure comprises 2108 residues: Mucin-5B (2108 aa).

Positions 1 to 21 are cleaved as a signal peptide; that stretch reads MEIKKERSFWIFCLIWSFCKG. Residues 36–203 enclose the VWFD 1 domain; the sequence is SECTTWGNFH…KVEDPSEKCP (168 aa). 2 cysteine pairs are disulfide-bonded: Cys38–Cys166 and Cys60–Cys202. The segment at 196–219 is disordered; the sequence is EDPSEKCPDVRPDDHTGRHPTEDD. The region spanning 304-360 is the TIL 1 domain; that stretch reads CPSNMEYMECGNSCADTCADPERSKICKAPCTDGCFCPPGTILDDLGGKKCVPRDSC. N-linked (GlcNAc...) (complex) asparagine glycosylation is present at Asn381. Residues 398-570 enclose the VWFD 2 domain; sequence GSCSIDGGFH…NSWKTRASCF (173 aa). Cystine bridges form between Cys400-Cys534, Cys422-Cys569, and Cys443-Cys451. N-linked (GlcNAc...) (complex) asparagine glycosylation is found at Asn528, Asn599, Asn680, and Asn772. The TIL 2 domain occupies 666 to 723; the sequence is CPETMVYNYSVKYCNQSCRSLDEPDPLCKVQIAPMEGCGCPEGTYLNDEEECVTPDDC. Residues 782–825 enclose the TIL 3 domain; sequence GSECQKSCKTQDMHCYVTECVSGCMCPDGLVLDGSGGCIPKDQC. Residues 825-897 enclose the VWFC 1 domain; that stretch reads CPCVHGGHFY…DYILAQDFCP (73 aa). Asn855 carries an N-linked (GlcNAc...) (complex) asparagine glycan. Residues 863-1033 form the VWFD 3 domain; it reads GTCTVYGNGH…NSWKITSTCS (171 aa). Disulfide bonds link Cys865/Cys997, Cys887/Cys1032, Cys896/Cys994, and Cys914/Cys921. Asn1036, Asn1219, Asn1371, and Asn1452 each carry an N-linked (GlcNAc...) (complex) asparagine glycan. One can recognise a VWFD 4 domain in the interval 1429–1613; sequence CICSGWGNEH…APVSTNRYCN (185 aa). 3 cysteine pairs are disulfide-bonded: Cys1431-Cys1573, Cys1453-Cys1612, and Cys1477-Cys1485. N-linked (GlcNAc...) (complex) asparagine glycans are attached at residues Asn1567, Asn1639, Asn1792, Asn1807, and Asn1841. The VWFC 2 domain maps to 1761 to 1832; it reads CGCTAQDGSV…DPCCTETVCE (72 aa). Residues 1870–1937 form the VWFC 3 domain; that stretch reads GVCVSEGVEF…KEGQCCSQCQ (68 aa). An N-linked (GlcNAc...) (complex) asparagine glycan is attached at Asn1964. Intrachain disulfides connect Cys2010–Cys2066, Cys2031–Cys2080, Cys2042–Cys2096, and Cys2046–Cys2098. A CTCK domain is found at 2010–2104; the sequence is CIDLPHKCKR…ECGCVETKCP (95 aa).

Homomultimer; disulfide-linked. The N- and C-terminus mediate their assembly into higher order structures to form filaments. The CTCK domains of two polypeptides associate in the endoplasmic reticulum to generate intermolecularly disulfide-bonded dimers. These dimers progress to the Golgi apparatus, which is a more acidic environment than the endoplasmic reticulum. Under acidic conditions, the N-termini form non-covalent intermolecular interactions that juxtapose assemblies from different CTCK-linked dimers to produce long, disulfide-linked polymers that remain highly compact until secretion. In terms of processing, N-glycosylated. Complex glycosylation with bisecting N-acetylglucosamine. Contains mainly N-acetylglucosamine (3.1-8.5%), mannose (2.9-4.6%), a small amount of galactose (1.1-4.35) and sialic acid (0.3-1.3%). Most abundant glycan is composed of a GlcNAc(2)Man(3) core, a bisecting GlcNAc and another 3 GlcNAc antannae located on the mannoses of the core. Site Asn-1639 exists both in glycosylated and non-glycosylated forms.

Its subcellular location is the secreted. Functionally, ovomucin, the glycoprotein responsible for the gel properties of egg white, is composed for 2 subunits, alpha-ovomucin/MUC5B and beta-ovomucin/MUC6. The chain is Mucin-5B (MUC5B) from Gallus gallus (Chicken).